A 246-amino-acid chain; its full sequence is AA9 family lytic polysaccharide monooxygenase D (246 aa).

The N-terminal stretch at 1 to 19 is a signal peptide; that stretch reads MHLLSLLFPVIALIPTVLS. Cu(2+) is bound at residue His-20. Cys-78 and Cys-196 are disulfide-bonded. Residues Asn-86, Asn-141, and Asn-156 are each glycosylated (N-linked (GlcNAc...) asparagine). O2 contacts are provided by His-182 and Gln-191. Tyr-193 lines the Cu(2+) pocket. Residue Asn-235 is glycosylated (N-linked (GlcNAc...) asparagine).

This sequence belongs to the polysaccharide monooxygenase AA9 family. Cu(2+) serves as cofactor.

It localises to the secreted. It catalyses the reaction [(1-&gt;4)-beta-D-glucosyl]n+m + reduced acceptor + O2 = 4-dehydro-beta-D-glucosyl-[(1-&gt;4)-beta-D-glucosyl]n-1 + [(1-&gt;4)-beta-D-glucosyl]m + acceptor + H2O.. Lytic polysaccharide monooxygenase (LPMO) that depolymerizes crystalline and amorphous polysaccharides via the oxidation of scissile alpha- or beta-(1-4)-glycosidic bonds, yielding C1 and C4 oxidation products. Catalysis by LPMOs requires the reduction of the active-site copper from Cu(II) to Cu(I) by a reducing agent and H(2)O(2) or O(2) as a cosubstrate. The protein is AA9 family lytic polysaccharide monooxygenase D of Botryotinia fuckeliana (strain B05.10) (Noble rot fungus).